A 172-amino-acid polypeptide reads, in one-letter code: Adenine phosphoribosyltransferase (172 aa).

This sequence belongs to the purine/pyrimidine phosphoribosyltransferase family. In terms of assembly, homodimer.

It is found in the cytoplasm. The catalysed reaction is AMP + diphosphate = 5-phospho-alpha-D-ribose 1-diphosphate + adenine. It functions in the pathway purine metabolism; AMP biosynthesis via salvage pathway; AMP from adenine: step 1/1. Catalyzes a salvage reaction resulting in the formation of AMP, that is energically less costly than de novo synthesis. The polypeptide is Adenine phosphoribosyltransferase (Exiguobacterium sibiricum (strain DSM 17290 / CCUG 55495 / CIP 109462 / JCM 13490 / 255-15)).